The primary structure comprises 218 residues: uncharacterized protein (218 aa).

The next 2 membrane-spanning stretches (helical) occupy residues 14 to 34 (CLLSIITILLYWYLRFVYFTS) and 175 to 195 (LIIPIPFGTIKIIVGSPLALV).

It to H.pylori HP0270.

It is found in the cell membrane. This is an uncharacterized protein from Rickettsia prowazekii (strain Madrid E).